The following is a 150-amino-acid chain: Regulatory protein RecX (150 aa).

This sequence belongs to the RecX family.

It is found in the cytoplasm. Functionally, modulates RecA activity. This is Regulatory protein RecX from Legionella pneumophila (strain Corby).